A 437-amino-acid chain; its full sequence is Epsilon-sarcoglycan (437 aa).

Residues 1-317 (MQLPRWWELG…LKSRDYYTDF (317 aa)) are Extracellular-facing. Asn-200 is a glycosylation site (N-linked (GlcNAc...) asparagine). The helical transmembrane segment at 318–338 (LITLAVPSAVALVLFLILAYI) threads the bilayer. The Cytoplasmic segment spans residues 339 to 437 (MCCRREGVEK…QQQTTGKWYP (99 aa)).

The protein belongs to the sarcoglycan alpha/epsilon family. N-glycosylated. Post-translationally, ubiquitinated, leading to its degradation by the proteasome. As to expression, ubiquitous.

The protein localises to the cell membrane. The protein resides in the sarcolemma. It localises to the cytoplasm. It is found in the cytoskeleton. Its subcellular location is the cell projection. The protein localises to the dendrite. The protein resides in the golgi apparatus. Component of the sarcoglycan complex, a subcomplex of the dystrophin-glycoprotein complex which forms a link between the F-actin cytoskeleton and the extracellular matrix. The protein is Epsilon-sarcoglycan (SGCE) of Homo sapiens (Human).